Consider the following 5162-residue polypeptide: Linear gramicidin synthase subunit B (5162 aa).

Carrier domains lie at 963–1038 (APRN…QALR), 2027–2101 (EPQS…VVLE), 3541–3616 (APRN…GAIG), and 4601–4675 (AATS…GQST). O-(pantetheine 4'-phosphoryl)serine occurs at positions 998, 2062, 3576, and 4636.

This sequence belongs to the ATP-dependent AMP-binding enzyme family. Large multienzyme complex composed of 4 subunits; LgrA, LgrB, LgrC and LgrD. The cofactor is pantetheine 4'-phosphate.

Its function is as follows. Activates the 3rd to 6th amino acids (Ala, D-Leu, Ala and D-Val) in linear gramicidin and catalyzes the formation of the peptide bond between them. This enzyme is also responsible for the epimerization of the 4th (D-Leu) and the 6th (D-Val) amino acids. This chain is Linear gramicidin synthase subunit B (lgrB), found in Brevibacillus parabrevis.